The sequence spans 440 residues: Endoglucanase B (440 aa).

An N-terminal signal peptide occupies residues 1 to 33; the sequence is MNKRLSRGKISLLASVFVTTTFMGGVNVLASTA. The active-site Proton donor is the glutamate 179. Glutamate 305 serves as the catalytic Nucleophile. Residues 381–440 form the Dockerin domain; it reads TSYSLGDVNKDGKVNAIDYAVLKSILLGTNTNVDLSVSDMNKDGKVNALDLAVLKKMLLS.

It belongs to the glycosyl hydrolase 5 (cellulase A) family.

It carries out the reaction Endohydrolysis of (1-&gt;4)-beta-D-glucosidic linkages in cellulose, lichenin and cereal beta-D-glucans.. It catalyses the reaction Endohydrolysis of (1-&gt;4)-beta-D-xylosidic linkages in xylans.. In terms of biological role, has endoglucanase activity on carboxymethyl-cellulose (CMC), xylan and lichenan, but not Avicel. This Clostridium cellulovorans (strain ATCC 35296 / DSM 3052 / OCM 3 / 743B) protein is Endoglucanase B (engB).